A 286-amino-acid polypeptide reads, in one-letter code: ATP synthase gamma chain (286 aa).

This sequence belongs to the ATPase gamma chain family. As to quaternary structure, F-type ATPases have 2 components, CF(1) - the catalytic core - and CF(0) - the membrane proton channel. CF(1) has five subunits: alpha(3), beta(3), gamma(1), delta(1), epsilon(1). CF(0) has three main subunits: a, b and c.

It is found in the cell inner membrane. Produces ATP from ADP in the presence of a proton gradient across the membrane. The gamma chain is believed to be important in regulating ATPase activity and the flow of protons through the CF(0) complex. This chain is ATP synthase gamma chain, found in Pseudomonas fluorescens (strain ATCC BAA-477 / NRRL B-23932 / Pf-5).